Reading from the N-terminus, the 348-residue chain is Protein RecA (348 aa).

Position 67-74 (67-74) interacts with ATP; the sequence is GPESSGKT.

It belongs to the RecA family.

It localises to the cytoplasm. Its function is as follows. Can catalyze the hydrolysis of ATP in the presence of single-stranded DNA, the ATP-dependent uptake of single-stranded DNA by duplex DNA, and the ATP-dependent hybridization of homologous single-stranded DNAs. It interacts with LexA causing its activation and leading to its autocatalytic cleavage. The polypeptide is Protein RecA (Kineococcus radiotolerans (strain ATCC BAA-149 / DSM 14245 / SRS30216)).